The following is a 290-amino-acid chain: uncharacterized protein (290 aa).

The HTH lysR-type domain occupies 1 to 61 (MVMNMNHLHI…RDKHHGLMLT (61 aa)). A DNA-binding region (H-T-H motif) is located at residues 20-39 (ITEAAKELFISQPAVSKAIK).

Belongs to the LysR transcriptional regulatory family.

This is an uncharacterized protein from Bacillus subtilis (strain 168).